A 1127-amino-acid polypeptide reads, in one-letter code: Disease resistance protein RPS6 (1127 aa).

Met-1 carries the N-acetylmethionine modification. In terms of domain architecture, TIR spans 12 to 176; sequence WSYHVFPSFS…EIANDILGKM (165 aa). The active site involves Glu-87. LRR repeat units lie at residues 197-221, 540-563, 587-609, 610-632, 633-656, 658-679, 680-704, 766-790, 791-813, 814-834, and 835-857; these read MSSLLHLESEEVRMVGIWGPSGIGK, IDETDELHIHESSFKGMHNLLFLK, PSRLRLLRFDRYPSKCLPSNFHP, ENLVKLQMQQSKLEKLWDGVHSL, AGLRNMDLRGSRNLKEIPDLSMAT, LETLKLSSCSSLVELPSSIQYL, NKLNDLDMSYCDHLETIPSGVNLKS, SPTLTRLTFSNNPSFVEVPSSIQNL, YQLEHLEIMNCRNLVTLPTGINL, DSLISLDLSHCSQLKTFPDIS, and TNISDLNLSYTAIEEVPLSIEKL.

Interacts with EDS1. As to expression, ubiquitous.

It catalyses the reaction NAD(+) + H2O = ADP-D-ribose + nicotinamide + H(+). Its function is as follows. Disease resistance (R) protein that specifically recognizes the hopA1 type III effector avirulence protein from Pseudomonas syringae. Resistance proteins guard the plant against pathogens that contain an appropriate avirulence protein via an indirect interaction with this avirulence protein. That triggers a defense system including the hypersensitive response, which restricts the pathogen growth. The protein is Disease resistance protein RPS6 of Arabidopsis thaliana (Mouse-ear cress).